Here is a 123-residue protein sequence, read N- to C-terminus: Molluscan insulin-related peptide 1 (123 aa).

Positions 1-31 (MAGVRLVFTKAFMVTVLLTLLLNIGVKPAEG) are cleaved as a signal peptide. Q32 bears the Pyrrolidone carboxylic acid mark. Intrachain disulfides connect C48–C109, C60–C122, and C108–C113. Residues 68-69 (MV) constitute a propeptide that is removed on maturation. Position 99 is a pyrrolidone carboxylic acid (Q99).

The protein belongs to the insulin family. In terms of assembly, heterodimer of a B chain and an A chain linked by two disulfide bonds. Expressed in the cerebral light-green cells which are giant neuroendocrines cells involved in the control of growth.

Its subcellular location is the cytoplasmic vesicle. The protein resides in the secretory vesicle. The protein is Molluscan insulin-related peptide 1 of Lymnaea stagnalis (Great pond snail).